Here is a 540-residue protein sequence, read N- to C-terminus: Chaperonin GroEL (540 aa).

ATP contacts are provided by residues 30 to 33 (TLGP), Lys51, 87 to 91 (DGTTT), Gly415, and Asp495.

Belongs to the chaperonin (HSP60) family. In terms of assembly, forms a cylinder of 14 subunits composed of two heptameric rings stacked back-to-back. Interacts with the co-chaperonin GroES.

It is found in the cytoplasm. It carries out the reaction ATP + H2O + a folded polypeptide = ADP + phosphate + an unfolded polypeptide.. Its function is as follows. Together with its co-chaperonin GroES, plays an essential role in assisting protein folding. The GroEL-GroES system forms a nano-cage that allows encapsulation of the non-native substrate proteins and provides a physical environment optimized to promote and accelerate protein folding. The sequence is that of Chaperonin GroEL from Rhodothermus marinus (Rhodothermus obamensis).